Here is a 311-residue protein sequence, read N- to C-terminus: MEDLYSIHPGISRGGGGGGGGAASEASGVAGGGSSPPHPPPPATTAAAADLTELMKAQIAGHPSYPSLLSAYIECRKVGAPPEVTTLLEEIGREGRGGGGGATAGGEIGLDPELDEFMETYCRVLERYKEELTRPFDEAASFLTGIHTQLASLCGGAPPPTDNSDEMVGSSEDEPCSGDADAADFGQEHSSRLADHELKEMLLKKYSGCLSRLRSEFLKKRKKGKLPKDARSALMDWWNTHYRWPYPTEEDKVRLAAMTGLDPKQINNWFINQRKRHWKPSEDMRFALMEGVTGGSSSGTTLYFDTGTIGP.

Disordered regions lie at residues 1–45 (MEDL…PATT) and 153–184 (LCGGAPPPTDNSDEMVGSSEDEPCSGDADAAD). Gly residues predominate over residues 12 to 22 (SRGGGGGGGGA). An ELK domain is found at 197–217 (ELKEMLLKKYSGCLSRLRSEF). The segment at residues 218 to 281 (LKKRKKGKLP…NQRKRHWKPS (64 aa)) is a DNA-binding region (homeobox; TALE-type).

Belongs to the TALE/KNOX homeobox family.

The protein localises to the nucleus. Functionally, probable transcription factor that may be involved in shoot formation during embryogenesis. This chain is Homeobox protein knotted-1-like 10 (OSH71), found in Oryza sativa subsp. indica (Rice).